The sequence spans 107 residues: uncharacterized protein (107 aa).

A helical transmembrane segment spans residues 37–59; sequence MVFSFLTVMPGDFIKCLFLRFFV.

The protein resides in the membrane. This is an uncharacterized protein from Saccharomyces cerevisiae (strain ATCC 204508 / S288c) (Baker's yeast).